We begin with the raw amino-acid sequence, 254 residues long: 5'/3'-nucleotidase SurE (254 aa).

A divalent metal cation is bound by residues aspartate 9, aspartate 10, serine 40, and asparagine 93.

It belongs to the SurE nucleotidase family. Requires a divalent metal cation as cofactor.

The protein resides in the cytoplasm. It catalyses the reaction a ribonucleoside 5'-phosphate + H2O = a ribonucleoside + phosphate. The catalysed reaction is a ribonucleoside 3'-phosphate + H2O = a ribonucleoside + phosphate. It carries out the reaction [phosphate](n) + H2O = [phosphate](n-1) + phosphate + H(+). Its function is as follows. Nucleotidase with a broad substrate specificity as it can dephosphorylate various ribo- and deoxyribonucleoside 5'-monophosphates and ribonucleoside 3'-monophosphates with highest affinity to 3'-AMP. Also hydrolyzes polyphosphate (exopolyphosphatase activity) with the preference for short-chain-length substrates (P20-25). Might be involved in the regulation of dNTP and NTP pools, and in the turnover of 3'-mononucleotides produced by numerous intracellular RNases (T1, T2, and F) during the degradation of various RNAs. In Proteus mirabilis (strain HI4320), this protein is 5'/3'-nucleotidase SurE.